The chain runs to 958 residues: Glucoamylase 1 (958 aa).

The first 22 residues, 1–22 (MIFLKLIKSIVIGLGLVSAIQA), serve as a signal peptide directing secretion. Residues Asn61, Asn78, Asn107, Asn197, Asn403, and Asn416 are each glycosylated (N-linked (GlcNAc...) asparagine). Catalysis depends on residues Asp470 and Glu473. Residues Asn513, Asn580, and Asn602 are each glycosylated (N-linked (GlcNAc...) asparagine). Asp638 (proton donor) is an active-site residue. 2 N-linked (GlcNAc...) asparagine glycosylation sites follow: Asn813 and Asn907.

Belongs to the glycosyl hydrolase 31 family.

The catalysed reaction is Hydrolysis of terminal (1-&gt;4)-linked alpha-D-glucose residues successively from non-reducing ends of the chains with release of beta-D-glucose.. Functionally, this glucoamylase has a specificity toward both alpha-1,4 and alpha-1,6 linkages. This chain is Glucoamylase 1 (GAM1), found in Schwanniomyces occidentalis (Yeast).